A 188-amino-acid polypeptide reads, in one-letter code: dCTP deaminase (188 aa).

DCTP-binding positions include 111–116 (KSTYAR), 135–137 (TLE), glutamine 156, tyrosine 170, and glutamine 180. Glutamate 137 functions as the Proton donor/acceptor in the catalytic mechanism.

Belongs to the dCTP deaminase family. In terms of assembly, homotrimer.

The enzyme catalyses dCTP + H2O + H(+) = dUTP + NH4(+). It functions in the pathway pyrimidine metabolism; dUMP biosynthesis; dUMP from dCTP (dUTP route): step 1/2. In terms of biological role, catalyzes the deamination of dCTP to dUTP. This Cupriavidus pinatubonensis (strain JMP 134 / LMG 1197) (Cupriavidus necator (strain JMP 134)) protein is dCTP deaminase.